The following is a 250-amino-acid chain: uncharacterized protein (250 aa).

The protein to class-3 of adenylyl cyclases.

This is an uncharacterized protein from Mycobacterium tuberculosis (strain ATCC 25618 / H37Rv).